The following is a 445-amino-acid chain: MKIRSTALVKGFRQSTPYVNAHRGKTMVILLGGEAIADKNFSNIINDIALMHSLGVKVVLVYGARPQINQLLDKQSSQTPYHKHIRVTDENSLSIVMQAAGQLQLAITASLSMSLNNTPMAGTHLNVVSGNFVIAQPLGIDEGVDYCHSGRIRRIDTEAINRSLDQGSIVLLGPIASSVTGECFNLLSEEVATQVAIKLKADKLIGFCSEQGVIDEEGNAVAELFPSDAEKFIQKLSVDVDPDSDFHSGTLRFLKGAVAACRAGVPRSHLISYKIDGALIQELFSFDGIGTQVVMASAEQVRQACIDDIGGILELIRPLEEQGILVRRSREQLEQEVERFTIIEKDGLIIGCAALYPYIDEHMAEMACVAIHPDYRDGNRGLLLLNYMKHRSKSIGIEQIFVLTTHSVHWFREQGFYEIGVDSLPMAKKSLYNYQRRSKILALPL.

The N-acetyltransferase domain occupies 299–438; the sequence is EQVRQACIDD…KSLYNYQRRS (140 aa).

The protein belongs to the acetyltransferase family. ArgA subfamily.

It is found in the cytoplasm. The catalysed reaction is L-glutamate + acetyl-CoA = N-acetyl-L-glutamate + CoA + H(+). Its pathway is amino-acid biosynthesis; L-arginine biosynthesis; N(2)-acetyl-L-ornithine from L-glutamate: step 1/4. This Vibrio vulnificus (strain CMCP6) protein is Amino-acid acetyltransferase (argA).